The following is a 338-amino-acid chain: DNA fragmentation factor subunit beta (338 aa).

The region spanning 4 to 80 (KPKSVKLRAL…LLTLGQAWQG (77 aa)) is the CIDE-N domain.

Heterodimer of DFFA and DFFB. Interacts with H1-1.

The protein localises to the cytoplasm. Its subcellular location is the nucleus. Inhibited by DFFA (DFF45). Its function is as follows. Nuclease that induces DNA fragmentation and chromatin condensation during apoptosis. Degrades naked DNA and induces apoptotic morphology. This chain is DNA fragmentation factor subunit beta (DFFB), found in Homo sapiens (Human).